Consider the following 340-residue polypeptide: Myomesin-1 (340 aa).

The tract at residues 177-212 (AEKARLKSRPSAPXTGQIIVTEEEPSEEAGTENXQR) is disordered. Residues 197 to 206 (TEEEPSEEAG) are compositionally biased toward acidic residues.

As to quaternary structure, homodimer. Interacts with TTN/titin and PNKD. In terms of tissue distribution, seems to be expressed in all cardiac and skeletal fibers.

The protein resides in the cytoplasm. It is found in the myofibril. The protein localises to the sarcomere. It localises to the m line. Functionally, major component of the vertebrate myofibrillar M band. Binds myosin, titin, and light meromyosin. This binding is dose dependent. This is Myomesin-1 (MYOM1) from Bos taurus (Bovine).